A 498-amino-acid polypeptide reads, in one-letter code: Bifunctional protein GlmU (498 aa).

Residues 1–238 are pyrophosphorylase; the sequence is MSDAAVVILA…PALVAGVNDR (238 aa). UDP-N-acetyl-alpha-D-glucosamine-binding positions include 9–12, Lys-23, Gln-80, and 85–86; these read LAAG and GT. Asp-111 is a Mg(2+) binding site. Positions 148, 163, 178, and 236 each coordinate UDP-N-acetyl-alpha-D-glucosamine. Mg(2+) is bound at residue Asn-236. The tract at residues 239 to 259 is linker; that stretch reads VQLADLGAELNRRVVAAHQRA. The N-acetyltransferase stretch occupies residues 260–498; the sequence is GVTIVDPATT…TAKPAPATGE (239 aa). 2 residues coordinate UDP-N-acetyl-alpha-D-glucosamine: Arg-341 and Lys-359. Residue His-371 is the Proton acceptor of the active site. 2 residues coordinate UDP-N-acetyl-alpha-D-glucosamine: Tyr-374 and Asn-385. Acetyl-CoA-binding positions include Ala-388, 394-395, Ser-413, and Ala-431; that span reads NY. The tract at residues 470–498 is disordered; sequence AAEAAAADGDTAAADRAAATAKPAPATGE.

It in the N-terminal section; belongs to the N-acetylglucosamine-1-phosphate uridyltransferase family. In the C-terminal section; belongs to the transferase hexapeptide repeat family. In terms of assembly, homotrimer. Mg(2+) is required as a cofactor.

The protein localises to the cytoplasm. The catalysed reaction is alpha-D-glucosamine 1-phosphate + acetyl-CoA = N-acetyl-alpha-D-glucosamine 1-phosphate + CoA + H(+). It carries out the reaction N-acetyl-alpha-D-glucosamine 1-phosphate + UTP + H(+) = UDP-N-acetyl-alpha-D-glucosamine + diphosphate. It functions in the pathway nucleotide-sugar biosynthesis; UDP-N-acetyl-alpha-D-glucosamine biosynthesis; N-acetyl-alpha-D-glucosamine 1-phosphate from alpha-D-glucosamine 6-phosphate (route II): step 2/2. Its pathway is nucleotide-sugar biosynthesis; UDP-N-acetyl-alpha-D-glucosamine biosynthesis; UDP-N-acetyl-alpha-D-glucosamine from N-acetyl-alpha-D-glucosamine 1-phosphate: step 1/1. It participates in bacterial outer membrane biogenesis; LPS lipid A biosynthesis. Catalyzes the last two sequential reactions in the de novo biosynthetic pathway for UDP-N-acetylglucosamine (UDP-GlcNAc). The C-terminal domain catalyzes the transfer of acetyl group from acetyl coenzyme A to glucosamine-1-phosphate (GlcN-1-P) to produce N-acetylglucosamine-1-phosphate (GlcNAc-1-P), which is converted into UDP-GlcNAc by the transfer of uridine 5-monophosphate (from uridine 5-triphosphate), a reaction catalyzed by the N-terminal domain. This Mycolicibacterium gilvum (strain PYR-GCK) (Mycobacterium gilvum (strain PYR-GCK)) protein is Bifunctional protein GlmU.